A 255-amino-acid polypeptide reads, in one-letter code: H-2 class II histocompatibility antigen, E-U alpha chain (255 aa).

The signal sequence occupies residues 1 to 25 (MATIGALLLRFFFIAVLMSSQKSWA). Residues 26–109 (IKEEHTIIQA…KRSNNTPDAN (84 aa)) are alpha-1. At 26–217 (IKEEHTIIQA…KTLLPETKEN (192 aa)) the chain is on the extracellular side. Positions 110 to 203 (VAPEVTVLSR…GLEEPLRKHW (94 aa)) are alpha-2. An Ig-like C1-type domain is found at 112–204 (PEVTVLSRSP…LEEPLRKHWE (93 aa)). Cysteine 132 and cysteine 188 are oxidised to a cystine. Asparagine 143 carries N-linked (GlcNAc...) asparagine glycosylation. Residues 204–216 (EFEEKTLLPETKE) form a connecting peptide region. The chain crosses the membrane as a helical span at residues 218–238 (VVCALGLFVGLVGIVVGIILI). At 239 to 255 (MKGIKKRNVVERRQGAL) the chain is on the cytoplasmic side.

This sequence belongs to the MHC class II family.

Its subcellular location is the membrane. The protein is H-2 class II histocompatibility antigen, E-U alpha chain (H2-Ea) of Mus musculus (Mouse).